The chain runs to 220 residues: Ribonuclease HII (220 aa).

The RNase H type-2 domain maps to 16–216 (PVFAGIDEAG…VRPNPAAEEQ (201 aa)). A divalent metal cation contacts are provided by aspartate 22, glutamate 23, and aspartate 114.

This sequence belongs to the RNase HII family. Requires Mn(2+) as cofactor. The cofactor is Mg(2+).

It localises to the cytoplasm. It catalyses the reaction Endonucleolytic cleavage to 5'-phosphomonoester.. Its function is as follows. Endonuclease that specifically degrades the RNA of RNA-DNA hybrids. The chain is Ribonuclease HII from Nitratidesulfovibrio vulgaris (strain ATCC 29579 / DSM 644 / CCUG 34227 / NCIMB 8303 / VKM B-1760 / Hildenborough) (Desulfovibrio vulgaris).